Consider the following 1081-residue polypeptide: MMSSVSTESKLQQAVSLKGVDPETCMIVFKNHWAQVVKILEKHDPLKNTQAKYGSIPPDEASAVQNYVEHMLFLLIEEQAKDAAMGPILEFVVCENIMEKLFLWSLRREFTDETKLEQLKMYEMLVTQSYQPLLHHKPILKPLMMLLSSCSGTATPAVEGKLVVLLNQLCSILAKDPSILELFFHTSEDQGAANFLIFSLLIPFIHREGTVGQQARDALLFIMSLSAENSMVANHIVENTYFCPVLATGLSGLYSSLPTKLEEKGEDWHCILKDDWLLLPALVQFMNSLEFCNAVIQVAHPLIRTQLVSYIYNGFLVPVLAPALHKVTVEEVMTTTAYLDLFLRSISEPALLEIFLRFILLHRHENVHILDTLTSRINTPFRLCVVSLALFRTLIGLHCEDVMLQLVLRYLVPCNHMMLSQRWAVKERDCYSVSAAKLLALTPVCCASGITLTLGNQERDYILWSKCMHDGSGSEEQLLPETPCSPSSPSPPPPPAPAACIVEYGKALDISYLQYLWEAHTNILHCMRDCRVWSALYDGDSPDPETFLQSLSEESRENSGHPEARLPQQSVRTSGQTKDKSQSELEWDDSYDTGISSGADVGSPGPDDEVETPAPPAPIDPPKHIQEMKKNAILLFKGSYIEESDFQDDVMVYRLCAEKDTEDTTEPQKDTSEPQGDTLEPLEDTSEQQEDTSEQLEDTSELQEDTAEPQGDTADPTAEAQPKLQPEAQSLPTSNGPLSSPDPETESQPSRESSDLCQNTFSEAKPENEPGVALALDSELIATTFEAEPQSELAVVSTESEDFIAQYDQIIQELDSGTEGLTEQSIPISEPSLLTQQEERREECKEEEDDDFDSLMAATPAVEAGSSPFGVGEDTAFSSRHPVRTQSTPFTGPFISVVLSKLENMLENSLHVNLLLIGIITQLASYPQPLLRSFLLNTNMVFQPSVRSLYQVLASVKNKIEQFASVERDFPGLLIQAQQYLLFRVDMSDMAPAALTKDPIQEISRPESDKTLLDGPPRVLQPFLGNRAKVTRAPPNLPLPVKNTMLAAALFPEFLKELAALAQEHSILCYKILGDFEDSCC.

Disordered regions lie at residues 474–496 (SEEQ…PPPA), 544–623 (PETF…DPPK), 658–770 (EKDT…ENEP), and 863–883 (EAGS…RHPV). The segment covering 486 to 496 (PSSPSPPPPPA) has biased composition (pro residues). The span at 553-564 (EESRENSGHPEA) shows a compositional bias: basic and acidic residues. Positions 567–576 (PQQSVRTSGQ) are enriched in polar residues. Over residues 680-707 (EPLEDTSEQQEDTSEQLEDTSELQEDTA) the composition is skewed to acidic residues. Polar residues-rich tracts occupy residues 727 to 738 (EAQSLPTSNGPL) and 746 to 762 (ESQP…NTFS).

This sequence belongs to the FHIP family. In terms of assembly, may be a component of the FTS/Hook/FHIP complex (FHF complex), composed of AKTIP/FTS, FHIP1B, and one or more members of the Hook family of proteins HOOK1, HOOK2, and HOOK3. May interact directly with AKTIP/FTS.

In terms of biological role, probable component of the FTS/Hook/FHIP complex (FHF complex). FHF complex promotes the distribution of AP-4 complex to the perinuclear area of the cell. This chain is FHF complex subunit HOOK-interacting protein 1A, found in Mus musculus (Mouse).